The chain runs to 205 residues: Probable nicotinate-nucleotide adenylyltransferase (205 aa).

It belongs to the NadD family.

It catalyses the reaction nicotinate beta-D-ribonucleotide + ATP + H(+) = deamido-NAD(+) + diphosphate. The protein operates within cofactor biosynthesis; NAD(+) biosynthesis; deamido-NAD(+) from nicotinate D-ribonucleotide: step 1/1. Its function is as follows. Catalyzes the reversible adenylation of nicotinate mononucleotide (NaMN) to nicotinic acid adenine dinucleotide (NaAD). This chain is Probable nicotinate-nucleotide adenylyltransferase, found in Nocardioides sp. (strain ATCC BAA-499 / JS614).